Reading from the N-terminus, the 194-residue chain is Peptidyl-tRNA hydrolase (194 aa).

Tyr17 is a tRNA binding site. His22 serves as the catalytic Proton acceptor. 3 residues coordinate tRNA: Phe68, Asn70, and Asn116.

The protein belongs to the PTH family. As to quaternary structure, monomer.

It localises to the cytoplasm. It catalyses the reaction an N-acyl-L-alpha-aminoacyl-tRNA + H2O = an N-acyl-L-amino acid + a tRNA + H(+). In terms of biological role, hydrolyzes ribosome-free peptidyl-tRNAs (with 1 or more amino acids incorporated), which drop off the ribosome during protein synthesis, or as a result of ribosome stalling. Functionally, catalyzes the release of premature peptidyl moieties from peptidyl-tRNA molecules trapped in stalled 50S ribosomal subunits, and thus maintains levels of free tRNAs and 50S ribosomes. This is Peptidyl-tRNA hydrolase from Haemophilus influenzae (strain 86-028NP).